A 637-amino-acid chain; its full sequence is Conglutin beta 5 (637 aa).

The signal sequence occupies residues 1–30; it reads MAKMRVRFPMLVLLLGVVFLLAVSIGIAYG. 3 stretches are compositionally biased toward basic and acidic residues: residues 33–105, 136–174, and 184–203; these read DVIK…REQE, RREE…REQE, and DYGR…REQE. 2 disordered regions span residues 33-221 and 384-439; these read DVIK…YFSS and EQED…LRSN. The 159-residue stretch at 217–375 folds into the Cupin type-1 1 domain; it reads YYFSSERFQT…TFNTHYEEIQ (159 aa). Residues 389–417 are compositionally biased toward basic and acidic residues; that stretch reads EQRREQEQSHQDEGVIVRVSKEQIQELRK. The Cupin type-1 2 domain maps to 434-594; sequence FNLRSNEPIY…IFPGSAEDVE (161 aa). N544 carries an N-linked (GlcNAc...) asparagine glycan. A compositionally biased stretch (low complexity) spans 606–615; the sequence is ANAQPQQQQQ. A disordered region spans residues 606–626; sequence ANAQPQQQQQQREKEGRRGRR.

This sequence belongs to the 7S seed storage protein family. In terms of assembly, component of globulins complexes which accumulate in seeds.

Its function is as follows. Seed storage protein. Accumulates during seed development and is hydrolyzed after germination to provide a carbon and nitrogen source for the developing seedling. The sequence is that of Conglutin beta 5 from Lupinus angustifolius (Narrow-leaved blue lupine).